A 461-amino-acid chain; its full sequence is Tumor necrosis factor receptor superfamily member 1A (461 aa).

An N-terminal signal peptide occupies residues 1 to 29 (MGLPIVPGLLLSLVLLALLMGIHPSGVTG). The Extracellular portion of the chain corresponds to 30 to 211 (LVPSLGDREK…VTNPQDSGTA (182 aa)). TNFR-Cys repeat units lie at residues 43-82 (LCPQ…TVCE), 83-125 (VCDK…DTVC), 126-166 (GCKK…NTVC), and 167-196 (NCHA…KLCL). Disulfide bonds link Cys44-Cys58, Cys59-Cys72, Cys62-Cys81, Cys84-Cys99, Cys102-Cys117, Cys105-Cys125, Cys127-Cys143, Cys146-Cys158, Cys149-Cys166, Cys168-Cys179, Cys182-Cys195, and Cys185-Cys191. Asn54 is a glycosylation site (N-linked (GlcNAc...) asparagine). Asn151 is a glycosylation site (N-linked (GlcNAc...) asparagine). A glycan (N-linked (GlcNAc...) asparagine) is linked at Asn201. A helical membrane pass occupies residues 212-234 (VLLPLVIFLGLCLLFFICISLLC). Over 235–461 (RYPQWRPRVY…AHSSTTHLPR (227 aa)) the chain is Cytoplasmic. The interval 344–354 (VRKWEDVVAAQ) is N-SMase activation domain (NSD). The Death domain occupies 363–448 (PAMLYAVVDG…GCLENIRETL (86 aa)).

Binding of TNF to the extracellular domain leads to homotrimerization. The aggregated death domains provide a novel molecular interface that interacts specifically with the death domain of TRADD. Various TRADD-interacting proteins such as TRAFS, RIPK1 and possibly FADD, are recruited to the complex by their association with TRADD. This complex activates at least two distinct signaling cascades, apoptosis and NF-kappa-B signaling. Interacts with BAG4, BABAM2, FEM1B, GRB2, SQSTM1 and TRPC4AP. Interacts with DAB2IP. Interacts directly with NOL3 (via CARD domain); inhibits TNF-signaling pathway. Interacts with SH3RF2, TRADD and RIPK1. SH3RF2 facilitates the recruitment of RIPK1 and TRADD to TNFRSF1A in a TNF-alpha-dependent process. Interacts with PGLYRP1; this interaction is important for cell death induction. Interacts (via death domain) with MADD (via death domain).

It is found in the cell membrane. The protein resides in the golgi apparatus membrane. Functionally, receptor for TNFSF2/TNF-alpha and homotrimeric TNFSF1/lymphotoxin-alpha. The adapter molecule FADD recruits caspase-8 to the activated receptor. The resulting death-inducing signaling complex (DISC) performs caspase-8 proteolytic activation which initiates the subsequent cascade of caspases (aspartate-specific cysteine proteases) mediating apoptosis. The polypeptide is Tumor necrosis factor receptor superfamily member 1A (Tnfrsf1a) (Rattus norvegicus (Rat)).